We begin with the raw amino-acid sequence, 603 residues long: UvrABC system protein C (603 aa).

The GIY-YIG domain maps to 15 to 92 (DQPGCYLMKD…IKKHDPRFNI (78 aa)). Residues 197–232 (KTVKNDLMKKMQEAAENMEFEKAGEFRDQINAIETT) form the UVR domain.

Belongs to the UvrC family. As to quaternary structure, interacts with UvrB in an incision complex.

The protein resides in the cytoplasm. Functionally, the UvrABC repair system catalyzes the recognition and processing of DNA lesions. UvrC both incises the 5' and 3' sides of the lesion. The N-terminal half is responsible for the 3' incision and the C-terminal half is responsible for the 5' incision. This is UvrABC system protein C from Listeria monocytogenes serotype 4b (strain F2365).